Reading from the N-terminus, the 194-residue chain is Large ribosomal subunit protein bL9 (194 aa).

Positions 165–194 are disordered; that stretch reads PEDAEEAVANEEEAEAALLDDEDADEYEQG. Residues 166–194 are compositionally biased toward acidic residues; the sequence is EDAEEAVANEEEAEAALLDDEDADEYEQG.

This sequence belongs to the bacterial ribosomal protein bL9 family.

Binds to the 23S rRNA. The polypeptide is Large ribosomal subunit protein bL9 (Rhodospirillum rubrum (strain ATCC 11170 / ATH 1.1.1 / DSM 467 / LMG 4362 / NCIMB 8255 / S1)).